Reading from the N-terminus, the 102-residue chain is Large ribosomal subunit protein bL28 (102 aa).

The interval 1 to 20 is disordered; that stretch reads MSRRCELTAKGPQVGHKVSH.

It belongs to the bacterial ribosomal protein bL28 family.

This is Large ribosomal subunit protein bL28 from Bradyrhizobium sp. (strain BTAi1 / ATCC BAA-1182).